Reading from the N-terminus, the 506-residue chain is NAD(P)H-quinone oxidoreductase subunit 2 (506 aa).

14 helical membrane-spanning segments follow: residues 14–34, 42–62, 79–99, 108–128, 132–152, 167–187, 206–226, 240–260, 276–296, 302–322, 330–350, 374–394, 409–429, and 462–482; these read AIIPEAFILLGIVGTLLVDLA, WAPVICYISLGSSLISLALQW, LAIAFRSIIALSTLISLLISW, PIGEFAAIVLSATLGAMLLCG, LVSVFISLETLSVASYCLSGY, LLVGSAAAAVYLYGSSFLYGL, FITSLSLVFVLSTVAFKIAAV, PTPVVAFLSVGSKTAGFAFAI, LLFTILAILSMALGNIVALAQ, MLAYSSIGQAGFVMIGIVSGT, VLYLAAYLFMNLGAFSCVILF, LGLSLCLLSLGGLPPMLGFFG, LLVVVGLITSVISIYYYISVI, and IALYTCIAVTALGGILSNPLF.

The protein belongs to the complex I subunit 2 family. As to quaternary structure, NDH-1 can be composed of about 15 different subunits; different subcomplexes with different compositions have been identified which probably have different functions.

Its subcellular location is the cellular thylakoid membrane. The catalysed reaction is a plastoquinone + NADH + (n+1) H(+)(in) = a plastoquinol + NAD(+) + n H(+)(out). It catalyses the reaction a plastoquinone + NADPH + (n+1) H(+)(in) = a plastoquinol + NADP(+) + n H(+)(out). In terms of biological role, NDH-1 shuttles electrons from an unknown electron donor, via FMN and iron-sulfur (Fe-S) centers, to quinones in the respiratory and/or the photosynthetic chain. The immediate electron acceptor for the enzyme in this species is believed to be plastoquinone. Couples the redox reaction to proton translocation, and thus conserves the redox energy in a proton gradient. Cyanobacterial NDH-1 also plays a role in inorganic carbon-concentration. The protein is NAD(P)H-quinone oxidoreductase subunit 2 of Prochlorococcus marinus subsp. pastoris (strain CCMP1986 / NIES-2087 / MED4).